The following is a 304-amino-acid chain: Oxygen-dependent coproporphyrinogen-III oxidase (304 aa).

Substrate is bound at residue serine 93. A divalent metal cation is bound by residues histidine 97 and histidine 107. Histidine 107 serves as the catalytic Proton donor. 109–111 is a binding site for substrate; it reads NVR. Histidine 146 and histidine 176 together coordinate a divalent metal cation. Residues 241–276 are important for dimerization; that stretch reads YVEFNLVYDRGTLFGLQSGGRTESILMSLPPQVRWG. Residue 259-261 coordinates substrate; that stretch reads GGR.

This sequence belongs to the aerobic coproporphyrinogen-III oxidase family. In terms of assembly, homodimer. Requires a divalent metal cation as cofactor.

The protein resides in the cytoplasm. The enzyme catalyses coproporphyrinogen III + O2 + 2 H(+) = protoporphyrinogen IX + 2 CO2 + 2 H2O. Its pathway is porphyrin-containing compound metabolism; protoporphyrin-IX biosynthesis; protoporphyrinogen-IX from coproporphyrinogen-III (O2 route): step 1/1. Involved in the heme biosynthesis. Catalyzes the aerobic oxidative decarboxylation of propionate groups of rings A and B of coproporphyrinogen-III to yield the vinyl groups in protoporphyrinogen-IX. The protein is Oxygen-dependent coproporphyrinogen-III oxidase of Pseudomonas syringae pv. tomato (strain ATCC BAA-871 / DC3000).